Consider the following 187-residue polypeptide: MKYLITGLGNIGSEYWGTRHNIGFRVVNHLVESVGGNFTEERYGAIARIRVKNCDLIVLKPNTFMNLSGNAVRYWLQKENIPVENLLIVVDDLALPFGTLRLKPKGSDAGHNGLKNIAQLLNTQEYSRLRFGIGSDFPRGGQIDYVLGKFPPEELQLMPEILDRATEIIKSFCLAGIQITMNQFNNK.

Tyr-15 contributes to the tRNA binding site. His-20 acts as the Proton acceptor in catalysis. TRNA-binding residues include Phe-64, Asn-66, and Asn-112.

This sequence belongs to the PTH family. Monomer.

The protein localises to the cytoplasm. The catalysed reaction is an N-acyl-L-alpha-aminoacyl-tRNA + H2O = an N-acyl-L-amino acid + a tRNA + H(+). In terms of biological role, hydrolyzes ribosome-free peptidyl-tRNAs (with 1 or more amino acids incorporated), which drop off the ribosome during protein synthesis, or as a result of ribosome stalling. Its function is as follows. Catalyzes the release of premature peptidyl moieties from peptidyl-tRNA molecules trapped in stalled 50S ribosomal subunits, and thus maintains levels of free tRNAs and 50S ribosomes. The chain is Peptidyl-tRNA hydrolase from Parabacteroides distasonis (strain ATCC 8503 / DSM 20701 / CIP 104284 / JCM 5825 / NCTC 11152).